The chain runs to 407 residues: Phosphoglycerate kinase (407 aa).

Substrate-binding positions include 24-26 (DFN), Arg40, 63-66 (HLGR), Arg121, and Arg154. ATP contacts are provided by residues Lys205, Glu337, and 363–366 (GGDS).

It belongs to the phosphoglycerate kinase family. In terms of assembly, monomer.

The protein resides in the cytoplasm. It carries out the reaction (2R)-3-phosphoglycerate + ATP = (2R)-3-phospho-glyceroyl phosphate + ADP. It functions in the pathway carbohydrate degradation; glycolysis; pyruvate from D-glyceraldehyde 3-phosphate: step 2/5. The sequence is that of Phosphoglycerate kinase from Gloeobacter violaceus (strain ATCC 29082 / PCC 7421).